The primary structure comprises 107 residues: Putative double-stranded DNA mimic protein Asuc_1259 (107 aa).

Belongs to the putative dsDNA mimic protein family.

Functionally, may act as a double-stranded DNA (dsDNA) mimic. Probably regulates the activity of a dsDNA-binding protein. This chain is Putative double-stranded DNA mimic protein Asuc_1259, found in Actinobacillus succinogenes (strain ATCC 55618 / DSM 22257 / CCUG 43843 / 130Z).